We begin with the raw amino-acid sequence, 164 residues long: Interleukin-36 beta (164 aa).

A propeptide spanning residues 1 to 4 (MNPQ) is cleaved from the precursor.

The protein belongs to the IL-1 family. In terms of assembly, interacts with cargo receptor TMED10; the interaction mediates the translocation from the cytoplasm into the ERGIC (endoplasmic reticulum-Golgi intermediate compartment) and thereby secretion. Post-translationally, N-terminal truncation leads to a dramatic enhancement of its activity (&gt;1000-fold). As to expression, expression at low levels in tonsil, bone marrow, heart, placenta, lung, testis and colon but not in any hematopoietic cell lines. Not detected in adipose tissue. Expressed at higher levels in psoriatic plaques than in symptomless psoriatic skin or healthy control skin. Increased levels are not detected in inflamed joint tissue.

The protein localises to the cytoplasm. Its subcellular location is the secreted. Its function is as follows. Cytokine that binds to and signals through the IL1RL2/IL-36R receptor which in turn activates NF-kappa-B and MAPK signaling pathways in target cells linked to a pro-inflammatory response. Part of the IL-36 signaling system that is thought to be present in epithelial barriers and to take part in local inflammatory response; similar to the IL-1 system with which it shares the coreceptor IL1RAP. Stimulates production of interleukin-6 and interleukin-8 in synovial fibrobasts, articular chondrocytes and mature adipocytes. Induces expression of a number of antimicrobial peptides including beta-defensins 4 and 103 as well as a number of matrix metalloproteases. Seems to be involved in skin inflammatory response by acting on keratinocytes, dendritic cells and indirectly on T-cells to drive tissue infiltration, cell maturation and cell proliferation. In cultured keratinocytes induces the expression of macrophage, T-cell, and neutrophil chemokines, such as CCL3, CCL4, CCL5, CCL2, CCL17, CCL22, CL20, CCL5, CCL2, CCL17, CCL22, CXCL8, CCL20 and CXCL1, and the production of pro-inflammatory cytokines such as TNF-alpha, IL-8 and IL-6. In Homo sapiens (Human), this protein is Interleukin-36 beta.